The following is a 227-amino-acid chain: [D-Ala2]-deltorphins (227 aa).

Residues 1–20 (MSFLKKSLLLVLFLGLVSHS) form the signal peptide. Positions 21–46 (VCKEEKRETEEENENEEENHEVGSEM) are excised as a propeptide. The disordered stretch occupies residues 22-227 (CKEEKRETEE…DVVGGEAKKM (206 aa)). A compositionally biased stretch (acidic residues) spans 30 to 39 (EEENENEEEN). The residue at position 50 (alanine 50) is a D-alanine (Ala). Positions 57–75 (DTEEKNENEEENQEEGSEM) are excised as a propeptide. The segment covering 62-72 (NENEEENQEEG) has biased composition (acidic residues). Positions 73–87 (SEMKRYAFGYPKREP) are enriched in basic and acidic residues. Residue alanine 79 is modified to D-alanine (Ala). Residues 86 to 104 (EPEEENENEEENHEEGSEM) constitute a propeptide that is removed on maturation. A compositionally biased stretch (acidic residues) spans 88 to 98 (EEENENEEENH). The span at 99-108 (EEGSEMKRYA) shows a compositional bias: basic and acidic residues. D-alanine (Ala) is present on alanine 108. The residue at position 113 (glycine 113) is a Glycine amide. The propeptide occupies 115 to 140 (EAKKMKREPEEENENEEENHEEGSEM). Over residues 124–134 (EEENENEEENH) the composition is skewed to acidic residues. Residues 135–144 (EEGSEMKRYA) show a composition bias toward basic and acidic residues. Residue alanine 144 is modified to D-alanine (Ala). The residue at position 149 (glycine 149) is a Glycine amide. A propeptide spanning residues 151–176 (EAKKMKREPEEENENEEENHEEGSEM) is cleaved from the precursor. Acidic residues predominate over residues 160 to 170 (EEENENEEENH). Residues 171–180 (EEGSEMKRYA) show a composition bias toward basic and acidic residues. The residue at position 180 (alanine 180) is a D-alanine (Ala). Glycine 185 carries the glycine amide modification. A propeptide spanning residues 187–212 (EAKKMKREPEEENENEEENHEEGSEM) is cleaved from the precursor. Over residues 196-206 (EEENENEEENH) the composition is skewed to acidic residues. Residues 207–216 (EEGSEMKRYA) are compositionally biased toward basic and acidic residues. Position 216 is a D-alanine (Ala) (alanine 216). Position 221 is a glycine amide (glycine 221). Residues 223–227 (EAKKM) constitute a propeptide that is removed on maturation.

This sequence belongs to the frog skin active peptide (FSAP) family. Dermorphin subfamily. In terms of tissue distribution, expressed by the skin glands.

It localises to the secreted. Deltorphin is a heptapeptide with a very potent opiate-like activity. Has high affinity and selectivity for delta-type opioid receptors. The two dermorphin-like peptides have a similar affinity and selectivity for the mu opioid receptor as dermorphin. The protein is [D-Ala2]-deltorphins of Phyllomedusa bicolor (Two-colored leaf frog).